We begin with the raw amino-acid sequence, 183 residues long: MHLLPELASHHAVSIPELLVSRDERQARQHAWLKRHPVPLVSFTVVAPGPIKDSEVTRRIFNHGVTALRALAAKQGWQIQEQAALVSASGPEGMLSIAAPARDLKLATIELEHNHPLGRLWDIDVLTPEGDILSRRDYSLPPRRCLLCEQSAAVCARGKTHQLTDLLNRMEALLNDVDACNVN.

This sequence belongs to the CitX family.

It carries out the reaction apo-[citrate lyase ACP] + 2'-(5''-triphospho-alpha-D-ribosyl)-3'-dephospho-CoA = holo-[citrate lyase ACP] + diphosphate. Its function is as follows. Transfers 2-(5''-triphosphoribosyl)-3'-dephosphocoenzyme-A on a serine residue to the apo-acyl carrier protein (gamma chain) of the citrate lyase to yield holo-acyl carrier protein. The sequence is that of Apo-citrate lyase phosphoribosyl-dephospho-CoA transferase from Escherichia coli O7:K1 (strain IAI39 / ExPEC).